Reading from the N-terminus, the 235-residue chain is Pro-opiomelanocortin (235 aa).

Positions Met-1–Ser-26 are cleaved as a signal peptide. Phe-87 carries the phenylalanine amide modification. Residues Gly-88 to Ser-126 are disordered. The span at Arg-90–Gln-100 shows a compositional bias: low complexity. A glycan (N-linked (GlcNAc...) asparagine) is linked at Asn-91. Positions Ala-103–Gly-121 are excised as a propeptide. Over residues Ser-117–Ser-126 the composition is skewed to basic and acidic residues. The residue at position 124 (Ser-124) is an N-acetylserine; in Corticotropin. Val-136 carries the valine amide modification. N-linked (GlcNAc...) asparagine glycosylation is present at Asn-152. Ser-154 carries the phosphoserine modification. A disordered region spans residues Glu-179–Thr-210. A compositionally biased stretch (basic and acidic residues) spans Asp-185–Tyr-205.

The protein belongs to the POMC family. Specific enzymatic cleavages at paired basic residues yield the different active peptides. ACTH and MSH are produced by the pituitary gland.

It is found in the secreted. Functionally, stimulates the adrenal glands to release cortisol. Anorexigenic peptide. Increases the pigmentation of skin by increasing melanin production in melanocytes. In terms of biological role, increases the pigmentation of skin by increasing melanin production in melanocytes. Its function is as follows. Endogenous orexigenic opiate. Functionally, endogenous opiate. The polypeptide is Pro-opiomelanocortin (Pomc) (Mus musculus (Mouse)).